The following is a 237-amino-acid chain: Lectin alpha chain (237 aa).

Mn(2+) contacts are provided by Glu-8 and Asp-10. Positions 10, 12, 14, and 19 each coordinate Ca(2+). A carbohydrate-binding residues include Tyr-12 and Asn-14. Positions 19 and 24 each coordinate Mn(2+). 99–100 (LY) contacts a carbohydrate. Asp-208 serves as a coordination point for Ca(2+). Arg-228 lines the a carbohydrate pocket.

Belongs to the leguminous lectin family. In terms of assembly, homodimer and homotetramer. Oligomerization is pH-dependent with homotetramers forming at pH 4 and above.

In terms of biological role, D-mannose/D-glucose-binding lectin. Has anti-inflammatory activity in animal models when applied intravenously. Has antinociceptive activity in mice when applied intravenously. The polypeptide is Lectin alpha chain (Canavalia boliviana).